The primary structure comprises 86 residues: Anti-adapter protein IraP (86 aa).

A coiled-coil region spans residues 1-36; the sequence is MKNLIAELLVKLAEKEEESKELVAQVEALEIVVTAL.

This sequence belongs to the IraP family. In terms of assembly, interacts with RssB.

It is found in the cytoplasm. In terms of biological role, inhibits RpoS proteolysis by regulating RssB activity, thereby increasing the stability of the sigma stress factor RpoS especially during phosphate starvation, but also in stationary phase and during nitrogen starvation. Its effect on RpoS stability is due to its interaction with RssB, which probably blocks the interaction of RssB with RpoS, and the consequent delivery of the RssB-RpoS complex to the ClpXP protein degradation pathway. The polypeptide is Anti-adapter protein IraP (Cronobacter sakazakii (strain ATCC BAA-894) (Enterobacter sakazakii)).